A 510-amino-acid polypeptide reads, in one-letter code: tRNA-2-methylthio-N(6)-dimethylallyladenosine synthase (510 aa).

One can recognise an MTTase N-terminal domain in the interval 19–144; that stretch reads RTYQVRTFGC…LPVLLERARH (126 aa). [4Fe-4S] cluster-binding residues include Cys-28, Cys-73, Cys-107, Cys-181, Cys-185, and Cys-188. The Radical SAM core domain maps to 167-397; the sequence is RESPYAAWVS…TALQDRITYE (231 aa). A TRAM domain is found at 400–470; it reads QAQTGRTLEV…PHYLEADDVS (71 aa). Basic and acidic residues predominate over residues 482–492; the sequence is AWEARQARPEP. Positions 482–510 are disordered; that stretch reads AWEARQARPEPESTGPRPVGLGLPTLRRA.

Belongs to the methylthiotransferase family. MiaB subfamily. As to quaternary structure, monomer. It depends on [4Fe-4S] cluster as a cofactor.

It is found in the cytoplasm. The catalysed reaction is N(6)-dimethylallyladenosine(37) in tRNA + (sulfur carrier)-SH + AH2 + 2 S-adenosyl-L-methionine = 2-methylsulfanyl-N(6)-dimethylallyladenosine(37) in tRNA + (sulfur carrier)-H + 5'-deoxyadenosine + L-methionine + A + S-adenosyl-L-homocysteine + 2 H(+). In terms of biological role, catalyzes the methylthiolation of N6-(dimethylallyl)adenosine (i(6)A), leading to the formation of 2-methylthio-N6-(dimethylallyl)adenosine (ms(2)i(6)A) at position 37 in tRNAs that read codons beginning with uridine. This is tRNA-2-methylthio-N(6)-dimethylallyladenosine synthase from Kineococcus radiotolerans (strain ATCC BAA-149 / DSM 14245 / SRS30216).